Consider the following 145-residue polypeptide: Major pollen allergen Lig v 1 (145 aa).

Intrachain disulfides connect Cys-19–Cys-90, Cys-22–Cys-131, and Cys-43–Cys-78. An N-linked (GlcNAc...) asparagine glycan is attached at Asn-111.

Belongs to the Ole e I family.

It is found in the secreted. The protein is Major pollen allergen Lig v 1 of Ligustrum vulgare (Common privet).